The sequence spans 372 residues: MKHIVIIGGGFAGVSTAHRFLKNVGKSTTAPYKVTLVSRDSHFFWNIAAPRGIIPGQIPEEKLFQPIAEGFSQYGPDKFEFVLGTATDLDVGGKTLVVDVDGKATRISYDYLIIGSGSRTKIPGPFKSDGSTDGVKQTIHDFQERVKAAKTIVVVGAGPTGVETAGELAFEYGTSKKIILISGGPTVLENRPASVTKTALKQLETLNVDVRVNTKAKDPVTLPDGKKELTLSGGEKLVVDLYIPTFGVLPNSSFVPSQYLDSNGFVQVDQYFQVKGAEGVFAIGDVSDSEAPQFWFVEKQSVHIAKNLILSLSGKAPTPYKASATGMMGLQIGKNSGTGHFGNFKLPGFLVKTIRKTLFVENLPKTVDGSML.

An N-terminal signal peptide occupies residues 1 to 16; that stretch reads MKHIVIIGGGFAGVST. 6-hydroxy-FAD is bound by residues 8–12 and arginine 51; that span reads GGGFA. Asparagine 251 carries an N-linked (GlcNAc...) asparagine glycan. Aspartate 285 provides a ligand contact to 6-hydroxy-FAD.

The protein belongs to the FAD-dependent oxidoreductase family. 6-hydroxy-FAD serves as cofactor.

Its pathway is secondary metabolite biosynthesis. In terms of biological role, oxidoreductase; part of the gene cluster that mediates the biosynthesis of pestheic acid, a diphenyl ether which is a biosynthetic precursor of the unique chloropupukeananes. The biosynthesis initiates from condensation of acetate and malonate units catalyzed by the non-reducing PKS ptaA. As the ptaA protein is TE/CLC domain-deficient, hydrolysis and Claisen cyclization of the polyketide could be catalyzed by ptaB containing a beta-lactamase domain. The ptaB protein might hydrolyze the thioester bond between the ACP of ptaA and the intermediate to release atrochrysone carboxylic acid, which is spontaneously dehydrated to form endocrocin anthrone. Endocrocin anthrone is then converted to endocrocin, catalyzed by the anthrone oxygenase ptaC. Spontaneous decarboxylation of endocrocin occurs to generate emodin. An O-methyltransferase (ptaH or ptaI) could methylate emodin to form physcion. PtaJ could then catalyze the oxidative cleavage of physcion, and rotation of the intermediate could then afford desmethylisosulochrin. PtaF, a putative NADH-dependent oxidoreductase, might also participate in the oxidative cleavage step. Desmethylisosulochrin is then transformed by another O-methyltransferase (ptaH or ptaI) to form isosulochrin. Chlorination of isosulochrin by ptaM in the cyclohexadienone B ring then produces chloroisosulochrin. PtaE is responsible for the oxidative coupling reactions of both benzophenones isosulochrin and chloroisosulochrin to RES-1214-1 and pestheic acid respectively, regardless of chlorination. This chain is Oxidoreductase ptaL, found in Pestalotiopsis fici (strain W106-1 / CGMCC3.15140).